The primary structure comprises 187 residues: Cytokinin riboside 5'-monophosphate phosphoribohydrolase (187 aa).

Lysine 74 is covalently cross-linked (Isoglutamyl lysine isopeptide (Lys-Gln) (interchain with Q-Cter in protein Pup)). Residues glutamate 80, 98-99, 115-121, and threonine 127 each bind substrate; these read RK and GVGTLDE.

Belongs to the LOG family. As to quaternary structure, homodimer. Post-translationally, pupylated at Lys-74 by the prokaryotic ubiquitin-like protein Pup, which leads to its degradation by the proteasome. The proteasomal control of cytokinin synthesis is essential to protect M.tuberculosis against host-produced NO.

It catalyses the reaction N(6)-(dimethylallyl)adenosine 5'-phosphate + H2O = N(6)-dimethylallyladenine + D-ribose 5-phosphate. It carries out the reaction 9-ribosyl-trans-zeatin 5'-phosphate + H2O = trans-zeatin + D-ribose 5-phosphate. Functionally, catalyzes the hydrolytic removal of ribose 5'-monophosphate from nitrogen N6-modified adenosines, the final step of bioactive cytokinin synthesis. Is involved in the synthesis of isopentenyladenine (iP) and 2-methylthio-iP (2MeS-iP), the most abundant cytokinins detected in M.tuberculosis lysates and supernatants. Is also able to convert trans-zeatin-riboside monophosphate (tZRMP) to trans-zeatin (tZ) in vitro; however, it may not be involved in the biosynthesis of this minor cytokinin in vivo. Accumulation of Rv1205 sensitizes M.tuberculosis to nitric oxide since cytokinin breakdown products synergize with NO to kill M.tuberculosis. Shows a slow AMP hydrolase activity, but is not able to hydrolyze ATP. Displays no lysine decarboxylase (LDC) activity (L-lysine conversion to cadaverine). In Mycobacterium tuberculosis (strain ATCC 25618 / H37Rv), this protein is Cytokinin riboside 5'-monophosphate phosphoribohydrolase.